The following is a 286-amino-acid chain: D-tagatose-1,6-bisphosphate aldolase subunit KbaY (286 aa).

The active-site Proton donor is the D82. The Zn(2+) site is built by H83 and H180. G181 provides a ligand contact to dihydroxyacetone phosphate. H208 provides a ligand contact to Zn(2+). Dihydroxyacetone phosphate is bound by residues 209 to 211 (GAS) and 230 to 233 (NVAT).

It belongs to the class II fructose-bisphosphate aldolase family. TagBP aldolase KbaY subfamily. As to quaternary structure, homotetramer. Forms a complex with KbaZ. Zn(2+) is required as a cofactor.

It carries out the reaction D-tagatofuranose 1,6-bisphosphate = D-glyceraldehyde 3-phosphate + dihydroxyacetone phosphate. It functions in the pathway carbohydrate metabolism; D-tagatose 6-phosphate degradation; D-glyceraldehyde 3-phosphate and glycerone phosphate from D-tagatose 6-phosphate: step 2/2. Functionally, catalytic subunit of the tagatose-1,6-bisphosphate aldolase KbaYZ, which catalyzes the reversible aldol condensation of dihydroxyacetone phosphate (DHAP or glycerone-phosphate) with glyceraldehyde 3-phosphate (G3P) to produce tagatose 1,6-bisphosphate (TBP). Requires KbaZ subunit for full activity and stability. Is involved in the catabolism of N-acetylgalactosamine and D-galactosamine. This is D-tagatose-1,6-bisphosphate aldolase subunit KbaY (kbaY) from Escherichia coli.